Reading from the N-terminus, the 155-residue chain is Small ribosomal subunit protein uS7cz/uS7cy (155 aa).

Belongs to the universal ribosomal protein uS7 family. As to quaternary structure, part of the 30S ribosomal subunit.

Its subcellular location is the plastid. The protein resides in the chloroplast. One of the primary rRNA binding proteins, it binds directly to 16S rRNA where it nucleates assembly of the head domain of the 30S subunit. This chain is Small ribosomal subunit protein uS7cz/uS7cy (rps7-A), found in Amborella trichopoda.